A 245-amino-acid polypeptide reads, in one-letter code: 1-(5-phosphoribosyl)-5-[(5-phosphoribosylamino)methylideneamino] imidazole-4-carboxamide isomerase (245 aa).

The active-site Proton acceptor is Asp7. Asp129 functions as the Proton donor in the catalytic mechanism.

This sequence belongs to the HisA/HisF family.

It localises to the cytoplasm. It carries out the reaction 1-(5-phospho-beta-D-ribosyl)-5-[(5-phospho-beta-D-ribosylamino)methylideneamino]imidazole-4-carboxamide = 5-[(5-phospho-1-deoxy-D-ribulos-1-ylimino)methylamino]-1-(5-phospho-beta-D-ribosyl)imidazole-4-carboxamide. It participates in amino-acid biosynthesis; L-histidine biosynthesis; L-histidine from 5-phospho-alpha-D-ribose 1-diphosphate: step 4/9. The sequence is that of 1-(5-phosphoribosyl)-5-[(5-phosphoribosylamino)methylideneamino] imidazole-4-carboxamide isomerase from Salmonella heidelberg (strain SL476).